Here is a 380-residue protein sequence, read N- to C-terminus: Tubby-like F-box protein 9 (380 aa).

In terms of domain architecture, F-box spans 30-76; the sequence is PFSWSELPEELLREILIRVETVDGGDWPSRRNVVACAGVCRSWRILT. The tract at residues 258–283 is disordered; it reads SSRSSPVFRSHSKPLRSNSASCSDSG. The span at 272-283 shows a compositional bias: polar residues; sequence LRSNSASCSDSG.

The protein belongs to the TUB family. In terms of assembly, part of a SCF (SKP1-cullin-F-box) protein ligase complex. Interacts with SKP1A/ASK1 and XERICO. As to expression, ubiquitous.

The protein operates within protein modification; protein ubiquitination. In terms of biological role, component of SCF(ASK-cullin-F-box) E3 ubiquitin ligase complexes, which may mediate the ubiquitination and subsequent proteasomal degradation of target proteins. Confers sensitivity to ABA during seed germination and early seedling development. In Arabidopsis thaliana (Mouse-ear cress), this protein is Tubby-like F-box protein 9.